The following is a 72-amino-acid chain: Translation initiation factor IF-1 (72 aa).

An S1-like domain is found at 2–72 (AKEDVIEIQG…TKGRITYRFK (71 aa)).

The protein belongs to the IF-1 family. In terms of assembly, component of the 30S ribosomal translation pre-initiation complex which assembles on the 30S ribosome in the order IF-2 and IF-3, IF-1 and N-formylmethionyl-tRNA(fMet); mRNA recruitment can occur at any time during PIC assembly.

It is found in the cytoplasm. In terms of biological role, one of the essential components for the initiation of protein synthesis. Stabilizes the binding of IF-2 and IF-3 on the 30S subunit to which N-formylmethionyl-tRNA(fMet) subsequently binds. Helps modulate mRNA selection, yielding the 30S pre-initiation complex (PIC). Upon addition of the 50S ribosomal subunit IF-1, IF-2 and IF-3 are released leaving the mature 70S translation initiation complex. The chain is Translation initiation factor IF-1 from Lactiplantibacillus plantarum (strain ATCC BAA-793 / NCIMB 8826 / WCFS1) (Lactobacillus plantarum).